An 820-amino-acid chain; its full sequence is Phenylalanine--tRNA ligase beta subunit (820 aa).

Positions K42–K154 constitute a tRNA-binding domain. The 77-residue stretch at P413 to I489 folds into the B5 domain. D467, D473, E476, and D477 together coordinate Mg(2+). Residues S727–R820 form the FDX-ACB domain.

This sequence belongs to the phenylalanyl-tRNA synthetase beta subunit family. Type 1 subfamily. As to quaternary structure, tetramer of two alpha and two beta subunits. Mg(2+) is required as a cofactor.

The protein localises to the cytoplasm. It carries out the reaction tRNA(Phe) + L-phenylalanine + ATP = L-phenylalanyl-tRNA(Phe) + AMP + diphosphate + H(+). This Bacteroides thetaiotaomicron (strain ATCC 29148 / DSM 2079 / JCM 5827 / CCUG 10774 / NCTC 10582 / VPI-5482 / E50) protein is Phenylalanine--tRNA ligase beta subunit.